The sequence spans 327 residues: 2-keto-3-deoxygluconate permease (327 aa).

The next 10 helical transmembrane spans lie at 10-30 (IPGG…TFSP), 42-62 (GMIT…GASI), 73-93 (KSGT…AIAS), 95-115 (IIPE…LALV), 139-159 (AGAF…IILG), 163-183 (IASF…VGFA), 199-219 (VQTL…LTVI), 224-244 (LLGI…LIIA), 254-274 (TAGI…VLIA), and 289-309 (SLVA…TSIW).

The protein belongs to the KdgT transporter family.

Its subcellular location is the cell inner membrane. The enzyme catalyses 2-dehydro-3-deoxy-D-gluconate(in) + H(+)(in) = 2-dehydro-3-deoxy-D-gluconate(out) + H(+)(out). In terms of biological role, catalyzes the proton-dependent uptake of 2-keto-3-deoxygluconate (KDG) into the cell. This is 2-keto-3-deoxygluconate permease from Escherichia coli O127:H6 (strain E2348/69 / EPEC).